The primary structure comprises 146 residues: Hemoglobin subunit beta (146 aa).

One can recognise a Globin domain in the interval Q2–H146. Residues H63 and H92 each coordinate heme b.

This sequence belongs to the globin family. Heterotetramer of two alpha chains and two beta chains. Red blood cells.

Involved in oxygen transport from the lung to the various peripheral tissues. The protein is Hemoglobin subunit beta (hbb) of Artedidraco orianae (Barbeled plunderfish).